A 582-amino-acid polypeptide reads, in one-letter code: Hemagglutinin-neuraminidase (582 aa).

Over 1 to 34 (MEPSKLFTMSDNATFAPGPVINAADKKTFRTCFR) the chain is Intravirion. A helical; Signal-anchor for type II membrane protein transmembrane segment spans residues 35–55 (ILVLSVQAVTLILVIVTLGEL). Residues 56 to 582 (VRMINDQGLS…LPVLTRLTIT (527 aa)) are Virion surface-facing. An N-linked (GlcNAc...) asparagine; by host glycan is attached at Asn127. Intrachain disulfides connect Cys178–Cys202, Cys192–Cys253, and Cys244–Cys257. An involved in neuraminidase activity region spans residues 240–245 (NRKSCS). Residues Asn284 and Asn329 are each glycosylated (N-linked (GlcNAc...) asparagine; by host). Disulfide bonds link Cys350/Cys471, Cys382/Cys392, and Cys465/Cys475. N-linked (GlcNAc...) asparagine; by host glycosylation is found at Asn400, Asn448, and Asn464. Residue Asn507 is glycosylated (N-linked (GlcNAc...) asparagine; by host). The cysteines at positions 545 and 556 are disulfide-linked.

Belongs to the paramyxoviruses hemagglutinin-neuraminidase family. As to quaternary structure, homotetramer; composed of disulfide-linked homodimers. Interacts with F protein trimer.

Its subcellular location is the virion membrane. The protein resides in the host cell membrane. It catalyses the reaction Hydrolysis of alpha-(2-&gt;3)-, alpha-(2-&gt;6)-, alpha-(2-&gt;8)- glycosidic linkages of terminal sialic acid residues in oligosaccharides, glycoproteins, glycolipids, colominic acid and synthetic substrates.. In terms of biological role, attaches the virus to alpha-2,3-linked sialic acid-containing cell receptors and thereby initiating infection. Binding of HN protein to the receptor induces a conformational change that allows the F protein to trigger virion/cell membranes fusion. Binds to the glycan motifs sialyl Lewis (SLe) and GM2 ganglioside (GM2-glycan). Neuraminidase (sialidase) activity ensures the efficient spread of the virus by dissociating the mature virions from the neuraminic acid containing glycoproteins. This is Hemagglutinin-neuraminidase (HN) from Mumps virus genotype B (strain Miyahara vaccine) (MuV).